The sequence spans 270 residues: Type III pantothenate kinase (270 aa).

Residue 6-13 (DVRNTHTV) participates in ATP binding. Position 109–112 (109–112 (GADR)) interacts with substrate. Asp111 functions as the Proton acceptor in the catalytic mechanism. Asp131 lines the K(+) pocket. Ser134 serves as a coordination point for ATP. Substrate is bound at residue Thr186.

This sequence belongs to the type III pantothenate kinase family. Homodimer. Requires NH4(+) as cofactor. K(+) is required as a cofactor.

It is found in the cytoplasm. The catalysed reaction is (R)-pantothenate + ATP = (R)-4'-phosphopantothenate + ADP + H(+). Its pathway is cofactor biosynthesis; coenzyme A biosynthesis; CoA from (R)-pantothenate: step 1/5. Its function is as follows. Catalyzes the phosphorylation of pantothenate (Pan), the first step in CoA biosynthesis. The chain is Type III pantothenate kinase from Mycolicibacterium gilvum (strain PYR-GCK) (Mycobacterium gilvum (strain PYR-GCK)).